Reading from the N-terminus, the 226-residue chain is Deoxyribose-phosphate aldolase (226 aa).

Glu-96 functions as the Proton donor/acceptor in the catalytic mechanism. Lys-157 functions as the Schiff-base intermediate with acetaldehyde in the catalytic mechanism. Lys-185 acts as the Proton donor/acceptor in catalysis.

Belongs to the DeoC/FbaB aldolase family. DeoC type 1 subfamily.

It localises to the cytoplasm. It catalyses the reaction 2-deoxy-D-ribose 5-phosphate = D-glyceraldehyde 3-phosphate + acetaldehyde. It participates in carbohydrate degradation; 2-deoxy-D-ribose 1-phosphate degradation; D-glyceraldehyde 3-phosphate and acetaldehyde from 2-deoxy-alpha-D-ribose 1-phosphate: step 2/2. Functionally, catalyzes a reversible aldol reaction between acetaldehyde and D-glyceraldehyde 3-phosphate to generate 2-deoxy-D-ribose 5-phosphate. This is Deoxyribose-phosphate aldolase from Gloeobacter violaceus (strain ATCC 29082 / PCC 7421).